A 34-amino-acid chain; its full sequence is Photosystem II reaction center protein M (34 aa).

A helical transmembrane segment spans residues 7 to 27 (GFIATILFVLVPTVFLLILYI).

Belongs to the PsbM family. In terms of assembly, PSII is composed of 1 copy each of membrane proteins PsbA, PsbB, PsbC, PsbD, PsbE, PsbF, PsbH, PsbI, PsbJ, PsbK, PsbL, PsbM, PsbT, PsbX, PsbY, PsbZ, Psb30/Ycf12, peripheral proteins PsbO, CyanoQ (PsbQ), PsbU, PsbV and a large number of cofactors. It forms dimeric complexes.

It localises to the cellular thylakoid membrane. One of the components of the core complex of photosystem II (PSII). PSII is a light-driven water:plastoquinone oxidoreductase that uses light energy to abstract electrons from H(2)O, generating O(2) and a proton gradient subsequently used for ATP formation. It consists of a core antenna complex that captures photons, and an electron transfer chain that converts photonic excitation into a charge separation. This subunit is found at the monomer-monomer interface. The chain is Photosystem II reaction center protein M from Picosynechococcus sp. (strain ATCC 27264 / PCC 7002 / PR-6) (Agmenellum quadruplicatum).